The primary structure comprises 592 residues: Putative D-/L-hydantoinase subunit B (592 aa).

This sequence belongs to the HyuB family. May form a complex with HyuA.

Its function is as follows. Involved in the asymmetric conversion of racemic 5-substituted hydantoins to the corresponding L-amino acids. HyuA and HyuB are both required for the conversion of D- and L-5-substituted hydantoins to corresponding N-carbamoyl-D- and N-carbamoyl-L-amino acids, respectively. This chain is Putative D-/L-hydantoinase subunit B, found in Pseudomonas sp. (strain NS671).